The sequence spans 445 residues: Tubulin beta-3 chain (445 aa).

The GTP site is built by Gln11, Glu69, Ser138, Gly142, Thr143, Gly144, Asn204, and Asn226. Residue Glu69 participates in Mg(2+) binding. The span at 417–426 (DLVSEYQQYQ) shows a compositional bias: polar residues. The interval 417–445 (DLVSEYQQYQEASADDEADEFDEEEGDEE) is disordered. Residues 429-445 (SADDEADEFDEEEGDEE) show a composition bias toward acidic residues.

Belongs to the tubulin family. Dimer of alpha and beta chains. A typical microtubule is a hollow water-filled tube with an outer diameter of 25 nm and an inner diameter of 15 nM. Alpha-beta heterodimers associate head-to-tail to form protofilaments running lengthwise along the microtubule wall with the beta-tubulin subunit facing the microtubule plus end conferring a structural polarity. Microtubules usually have 13 protofilaments but different protofilament numbers can be found in some organisms and specialized cells. Mg(2+) serves as cofactor.

It localises to the cytoplasm. It is found in the cytoskeleton. Tubulin is the major constituent of microtubules, a cylinder consisting of laterally associated linear protofilaments composed of alpha- and beta-tubulin heterodimers. Microtubules grow by the addition of GTP-tubulin dimers to the microtubule end, where a stabilizing cap forms. Below the cap, tubulin dimers are in GDP-bound state, owing to GTPase activity of alpha-tubulin. This chain is Tubulin beta-3 chain (TUBB3), found in Oomycete-like sp. (strain MacKay2000).